The sequence spans 269 residues: Putative hydro-lyase Swoo_1731 (269 aa).

It belongs to the D-glutamate cyclase family.

In Shewanella woodyi (strain ATCC 51908 / MS32), this protein is Putative hydro-lyase Swoo_1731.